Reading from the N-terminus, the 433-residue chain is Gamma-glutamyl phosphate reductase (433 aa).

This sequence belongs to the gamma-glutamyl phosphate reductase family.

The protein localises to the cytoplasm. The enzyme catalyses L-glutamate 5-semialdehyde + phosphate + NADP(+) = L-glutamyl 5-phosphate + NADPH + H(+). The protein operates within amino-acid biosynthesis; L-proline biosynthesis; L-glutamate 5-semialdehyde from L-glutamate: step 2/2. In terms of biological role, catalyzes the NADPH-dependent reduction of L-glutamate 5-phosphate into L-glutamate 5-semialdehyde and phosphate. The product spontaneously undergoes cyclization to form 1-pyrroline-5-carboxylate. The protein is Gamma-glutamyl phosphate reductase of Rhodopseudomonas palustris (strain BisB18).